The primary structure comprises 461 residues: Argininosuccinate lyase (461 aa).

This sequence belongs to the lyase 1 family. Argininosuccinate lyase subfamily.

The protein resides in the cytoplasm. It catalyses the reaction 2-(N(omega)-L-arginino)succinate = fumarate + L-arginine. Its pathway is amino-acid biosynthesis; L-arginine biosynthesis; L-arginine from L-ornithine and carbamoyl phosphate: step 3/3. The protein is Argininosuccinate lyase of Syntrophotalea carbinolica (strain DSM 2380 / NBRC 103641 / GraBd1) (Pelobacter carbinolicus).